The primary structure comprises 470 residues: Dendritic cell-specific transmembrane protein (470 aa).

Topologically, residues 1–33 (MRLWTLGTSIFLRLWGTYVFPRSPSWLDFIQHL) are cytoplasmic. Residues 34–54 (GVCCFVAFLSVSLFSAAFYWI) form a helical membrane-spanning segment. Leucine 55 is a topological domain (extracellular). Residues 56–76 (PPVALLSSVWMITCVFLCCSK) form a helical membrane-spanning segment. Topologically, residues 77–97 (RARCFILLAVLSCGLREGRNA) are cytoplasmic. Residues 98-118 (LIAAGTGVVIFGHVENIFYNF) form a helical membrane-spanning segment. Over 119–209 (RGLLDSMTCN…MVVTTELLTS (91 aa)) the chain is Extracellular. Residues 210–230 (VGQKLLALAGLLLILVSTGLF) form a helical membrane-spanning segment. The Cytoplasmic segment spans residues 231 to 292 (LKRFLGPCGW…LQLTPKEKKT (62 aa)). The chain crosses the membrane as a helical span at residues 293-313 (LGLFFLPVLTYLYMWVLFAAV). Residues 314 to 376 (DYLLYRLISS…PKPRLSVSET (63 aa)) are Extracellular-facing. The helical transmembrane segment at 377–397 (WVPLSIILLTLIILGLLSSML) threads the bilayer. Over 398–470 (MQLKILVSVS…QTIPANEDDL (73 aa)) the chain is Cytoplasmic.

In terms of assembly, interacts with CREB3. Monomer. Homodimer. Isoform 1 interacts (via the C-terminus cytoplasmic tail) with OS9 isoform 1 (via the C-terminus tail); the interaction induces DCSTAMP redistribution to the endoplasmic reticulum-Golgi intermediate compartment. Isoform 1 interacts (via the C-terminus cytoplasmic tail) with OS9 isoform 2 (via the C-terminus tail). Glycosylated. Expressed in macrophages and bone marrow dendritic cells (BM-DC). Weakly expressed in the spleen and lymph node. Highly expressed in multi-nuclear osteoclasts compared to mono-nuclear macrophages. Expressed in foreign body giant cells (FBGCs). Isoform 1 and isoform 2 are expressed in osteoclasts.

Its subcellular location is the cell membrane. It localises to the endoplasmic reticulum membrane. The protein resides in the endoplasmic reticulum-Golgi intermediate compartment membrane. The protein localises to the endosome. In terms of biological role, probable cell surface receptor that plays several roles in cellular fusion, cell differentiation, bone and immune homeostasis. Plays a role in TNFSF11-mediated osteoclastogenesis. Cooperates with OCSTAMP in modulating cell-cell fusion in both osteoclasts and foreign body giant cells (FBGCs). Participates in osteoclast bone resorption. Involved in inducing the expression of tartrate-resistant acid phosphatase in osteoclast precursors. Plays a role in haematopoietic stem cell differentiation of bone marrow cells toward the myeloid lineage. Inhibits the development of neutrophilic granulocytes. Plays also a role in the regulation of dendritic cell (DC) antigen presentation activity by controlling phagocytic activity. Involved in the maintenance of immune self-tolerance and avoidance of autoimmune reactions. This Mus musculus (Mouse) protein is Dendritic cell-specific transmembrane protein (Dcstamp).